Consider the following 184-residue polypeptide: ATP synthase subunit b, chloroplastic (184 aa).

The helical transmembrane segment at 27-49 (LATNPINLSVVFGVLIFFGKGVL) threads the bilayer.

It belongs to the ATPase B chain family. As to quaternary structure, F-type ATPases have 2 components, F(1) - the catalytic core - and F(0) - the membrane proton channel. F(1) has five subunits: alpha(3), beta(3), gamma(1), delta(1), epsilon(1). F(0) has four main subunits: a(1), b(1), b'(1) and c(10-14). The alpha and beta chains form an alternating ring which encloses part of the gamma chain. F(1) is attached to F(0) by a central stalk formed by the gamma and epsilon chains, while a peripheral stalk is formed by the delta, b and b' chains.

It localises to the plastid. Its subcellular location is the chloroplast thylakoid membrane. Functionally, f(1)F(0) ATP synthase produces ATP from ADP in the presence of a proton or sodium gradient. F-type ATPases consist of two structural domains, F(1) containing the extramembraneous catalytic core and F(0) containing the membrane proton channel, linked together by a central stalk and a peripheral stalk. During catalysis, ATP synthesis in the catalytic domain of F(1) is coupled via a rotary mechanism of the central stalk subunits to proton translocation. In terms of biological role, component of the F(0) channel, it forms part of the peripheral stalk, linking F(1) to F(0). The protein is ATP synthase subunit b, chloroplastic of Barbarea verna (Land cress).